We begin with the raw amino-acid sequence, 1473 residues long: Ovostatin (1473 aa).

The N-terminal stretch at 1–36 (MHCFLGREILSFFCLTVRKMWLKFILAILLLHAAAG) is a signal peptide. 13 N-linked (GlcNAc...) asparagine glycosylation sites follow: Asn67, Asn82, Asn89, Asn191, Asn342, Asn403, Asn527, Asn588, Asn757, Asn1141, Asn1221, Asn1315, and Asn1347.

It belongs to the protease inhibitor I39 (alpha-2-macroglobulin) family. Homotetramer, which consists of two pairs of disulfide-linked chains. Post-translationally, lacks the thioester bond found in other members of this family. In terms of processing, glycosylated; contains 56 glucosamine units per subunit.

It localises to the secreted. In terms of biological role, is able to inhibit all four classes of proteinases by a unique 'trapping' mechanism. This protein has a peptide stretch, called the 'bait region' which contains specific cleavage sites for different proteinases. When a proteinase cleaves the bait region, a conformational change is induced in the protein which traps the proteinase. The entrapped enzyme remains active against low molecular weight substrates (activity against high molecular weight substrates is greatly reduced). The protein is Ovostatin of Gallus gallus (Chicken).